A 446-amino-acid chain; its full sequence is Adenylosuccinate synthetase (446 aa).

Residues 21–27 (GDEGKGK) and 49–51 (GHT) each bind GTP. The Proton acceptor role is filled by D22. Mg(2+) contacts are provided by D22 and G49. IMP-binding positions include 22–25 (DEGK), 47–50 (NAGH), T141, R155, Q236, T251, and R319. Catalysis depends on H50, which acts as the Proton donor. 315–321 (VTTGRSR) contributes to the substrate binding site. GTP-binding positions include R321, 347 to 349 (KLD), and 429 to 431 (STS).

This sequence belongs to the adenylosuccinate synthetase family. In terms of assembly, homodimer. The cofactor is Mg(2+).

Its subcellular location is the cytoplasm. The catalysed reaction is IMP + L-aspartate + GTP = N(6)-(1,2-dicarboxyethyl)-AMP + GDP + phosphate + 2 H(+). The protein operates within purine metabolism; AMP biosynthesis via de novo pathway; AMP from IMP: step 1/2. Functionally, plays an important role in the de novo pathway of purine nucleotide biosynthesis. Catalyzes the first committed step in the biosynthesis of AMP from IMP. The sequence is that of Adenylosuccinate synthetase from Polaromonas naphthalenivorans (strain CJ2).